The sequence spans 111 residues: Cytochrome c (111 aa).

Ala-1 is subject to N-acetylalanine. Cys-22, Cys-25, and His-26 together coordinate heme c. Lys-80 carries the N6,N6,N6-trimethyllysine modification. Met-88 serves as a coordination point for heme c. Position 94 is an N6,N6,N6-trimethyllysine (Lys-94).

Belongs to the cytochrome c family. Post-translationally, binds 1 heme c group covalently per subunit.

It is found in the mitochondrion intermembrane space. Functionally, electron carrier protein. The oxidized form of the cytochrome c heme group can accept an electron from the heme group of the cytochrome c1 subunit of cytochrome reductase. Cytochrome c then transfers this electron to the cytochrome oxidase complex, the final protein carrier in the mitochondrial electron-transport chain. This Gossypium barbadense (Sea Island cotton) protein is Cytochrome c.